We begin with the raw amino-acid sequence, 316 residues long: Protein C4 (316 aa).

The protein belongs to the poxviridae OPG031 protein family.

Its subcellular location is the host cytoplasm. It is found in the host nucleus. Functionally, plays a role in the inhibition of host NF-kappa-B activation. Mechanistically, blocks the subunit p65/RELA translocation into the host nucleus. The polypeptide is Protein C4 (OPG031) (Vaccinia virus (strain Western Reserve) (VACV)).